The sequence spans 200 residues: MHKRRTAKSINKPPPIQGAIKKPTPVAEPPSIDADLVTQFEVELCWCVQQLQTALDSGKLAQKVAEDTAKNIKVLTSSTAPLIRKRQVMKLALGDYRAKMQQEEQKLLLASRQIKFTPTAESSKKSSFVKKSALLSSGKDFRFNFPSPAEDTSSKEPQPVQDFDPSSLQPAEAGSPFKFNFTIAEDSANDISFSGLNLNK.

2 disordered regions span residues Met-1–Glu-28 and Lys-139–Gly-174.

Belongs to the UPF0488 family.

In Drosophila melanogaster (Fruit fly), this protein is UPF0488 protein CG14286.